A 149-amino-acid chain; its full sequence is Calmodulin (149 aa).

N-acetylalanine is present on Ala2. EF-hand domains lie at 8–43, 44–79, 81–116, and 117–149; these read DQISEFKEAFSLFDKDGDGCITTKELGTVMRSLGQN, PTEAELQDMINEVDADGNGTIDFPEFLNLMARKMKD, DSEEELKEAFRVFDKDQNGFISAAELRHVMTNLGEK, and LTDEEVDEMIREADVDGDGQINYDEFVKVMMAK. Residues Asp21, Asp23, Asp25, Cys27, Glu32, Asp57, Asp59, Asn61, Thr63, Glu68, Asp94, Asp96, Asn98, and Glu105 each coordinate Ca(2+). Lys116 bears the N6,N6,N6-trimethyllysine mark. Ca(2+)-binding residues include Asp130, Asp132, Asp134, Gln136, and Glu141.

This sequence belongs to the calmodulin family.

Functionally, calmodulin mediates the control of a large number of enzymes, ion channels and other proteins by Ca(2+). Among the enzymes to be stimulated by the calmodulin-Ca(2+) complex are a number of protein kinases and phosphatases. This is Calmodulin (CCM1) from Capsicum annuum (Capsicum pepper).